Reading from the N-terminus, the 657-residue chain is Transmembrane protein 232 (657 aa).

A run of 2 helical transmembrane segments spans residues 168–188 (IGYL…LESF) and 353–373 (WAWN…LYAA).

It localises to the membrane. Plays a critical role for male fertility and sperm motility by regulating sperm cytoplasm removal and maintaining axoneme integrity. This Homo sapiens (Human) protein is Transmembrane protein 232 (TMEM232).